The chain runs to 259 residues: MPVVTMKQLLEAGVHFGHRTQRWNPKMKPYIYGARKGIYIIDLQKTVKLIDEAYDFVRDVASKGGTILFVGTKKQAQQVVKNEAERCGGFYVNNRWLGGLLTNFQTIQSRIQRLIELEEMEANGELDKLPKKEQSKLRKTLEKLRKNLGGLKNMRGLPDVIFVVDPRKEKIAVEEANYLGIPIVAMVDTNCDPDPIDYVIPSNDDAIRAIALIASKIADAYLEGREGVPYSSEEAAAQPEEKIEEIEINIPEGIGEEEI.

The protein belongs to the universal ribosomal protein uS2 family.

This Fervidobacterium nodosum (strain ATCC 35602 / DSM 5306 / Rt17-B1) protein is Small ribosomal subunit protein uS2.